A 513-amino-acid polypeptide reads, in one-letter code: Zinc finger protein RFP (513 aa).

The segment at 16-57 adopts an RING-type zinc-finger fold; sequence CPVCLQYFAEPMMLDCGHNICCACLARCWGTAETNVSCPQCR. Zn(2+) contacts are provided by Cys-96, His-99, Cys-118, and His-124. Residues 96 to 127 form a B box-type zinc finger; it reads CEKHREPLKLYCEEDQMPICVVCDRSREHRGH. Coiled-coil stretches lie at residues 132-172 and 282-311; these read LEEA…AELL and QKCL…LREA. The 195-residue stretch at 298 to 492 folds into the B30.2/SPRY domain; the sequence is MQSDMEKIQE…SAAPLIICPM (195 aa).

Belongs to the TRIM/RBCC family. In terms of assembly, homomultimerizes. Part of a complex consisting of TRIM27, USP7 and MAGEL2; directly interacts with USP7. Interacts with PML, EIF3S6, EPC1, CHD4 and EID1. Interacts with MAGED4, MAGEF1 and MAGEL2. Interacts with PTPN11. Interacts with autophagy receptor p62/SQSTM1. As to quaternary structure, (Microbial infection) Interacts with M.tuberculosis PtpA, whick blocks TRIM27-promoted JNK/p38 MAPK pathway activation and cell apoptosis. (Microbial infection) Interacts with herpes simplex virus protein ICP0. As to expression, expressed in testis namely within the seminiferous tubules.

It is found in the nucleus. The protein localises to the cytoplasm. It localises to the PML body. Its subcellular location is the early endosome. The protein resides in the mitochondrion. It catalyses the reaction S-ubiquitinyl-[E2 ubiquitin-conjugating enzyme]-L-cysteine + [acceptor protein]-L-lysine = [E2 ubiquitin-conjugating enzyme]-L-cysteine + N(6)-ubiquitinyl-[acceptor protein]-L-lysine.. The protein operates within protein modification; protein ubiquitination. E3 ubiquitin-protein ligase that mediates ubiquitination of various substrates and thereby plays a role in diffent processes including proliferation, innate immunity, apoptosis, immune response or autophagy. Ubiquitinates PIK3C2B and inhibits its activity by mediating the formation of 'Lys-48'-linked polyubiquitin chains; the function inhibits CD4 T-cell activation. Acts as a regulator of retrograde transport: together with MAGEL2, mediates the formation of 'Lys-63'-linked polyubiquitin chains at 'Lys-220' of WASHC1, leading to promote endosomal F-actin assembly. Has a transcriptional repressor activity by cooperating with EPC1. Induces apoptosis by activating Jun N-terminal kinase and p38 kinase and also increases caspase-3-like activity independently of mitochondrial events. May function in male germ cell development. Has DNA-binding activity and preferentially bound to double-stranded DNA. Forms a complex with and ubiquitinates the ubiquitin-specific protease USP7, which in turn deubiquitinates RIPK1 resulting in the positive regulation of TNF-alpha-induced apoptosis. In addition, acts with USP7 or PTPN11 as an inhibitor of the antiviral signaling pathway by promoting kinase TBK1 ubiquitination and degradation. Acts as a negative regulator of NOD2 signaling by mediating ubiquitination of NOD2, promoting its degradation by the proteasome. Alternatively, facilitates mitophagy via stabilization of active TBK1. Negatively regulates autophagy flux under basal conditions by directly polyubiquitinating ULK1. During starvation-induced autophagy, catalyzes non-degradative ubiquitination of the kinase STK38L promoting its activation and phosphorylation of ULK1 leading to its ubiquitination and degradation to restrain the amplitude and duration of autophagy. Functionally, (Microbial infection) Positively regulates hepatitis C virus replication by suppressing type I IFN response during infection. The chain is Zinc finger protein RFP from Homo sapiens (Human).